Reading from the N-terminus, the 193-residue chain is Putative 3-methyladenine DNA glycosylase (193 aa).

Belongs to the DNA glycosylase MPG family.

The protein is Putative 3-methyladenine DNA glycosylase of Agrobacterium fabrum (strain C58 / ATCC 33970) (Agrobacterium tumefaciens (strain C58)).